Here is an 816-residue protein sequence, read N- to C-terminus: MGDTVVEPAPLKPTSEPTSGPPGNNGGSLLSVITEGVGELSVIDPEVAQKACQDVLEKVKLLHGGMAVSSKGAPLELVNGDGVDSEIRCLDDPPAQIREEEDEMGATVASGTAKGARRRRQNNSAKQSWLLRLFESKLFDISMAISYLYNSKEPGVQAYIGNRLFCFRNEDVDFYLPQLLNMYIHMDEDVGDAIKPYIVYRCRQSINFSLQCALLLGAYSSDMHISTQRHSRGTKLRKLILSDELKPAHRKRELPSLSPAPDTGLSPSKRTHQRSKSDATASISLSSNLKRTASNPKVENEDEELSSSTESIDNSFSSPVRLAPEREFIKSLMAIGKRLATLPTKEQKTQRLISELSLLNHKLPARVWLPTAGFDHHVVRVPHTQAVVLNSKDKAPYLIYVEVLECENFDTTSVPARIPENRIRSTRSVENLPECGITHEQRAGSFSTVPNYDNDDEAWSVDDIGELQVELPEVHTNSCDNISQFSVDSITSQESKEPVFIAAGDIRRRLSEQLAHTPTAFKRDPEDPSAVALKEPWQEKVRRIREGSPYGHLPNWRLLSVIVKCGDDLRQELLAFQVLKQLQSIWEQERVPLWIKPYKILVISADSGMIEPVVNAVSIHQVKKQSQLSLLDYFLQEHGSYTTEAFLSAQRNFVQSCAGYCLVCYLLQVKDRHNGNILLDAEGHIIHIDFGFILSSSPRNLGFETSAFKLTTEFVDVMGGLDGDMFNYYKMLMLQGLIAARKHMDKVVQIVEIMQQGSQLPCFHGSSTIRNLKERFHMSMTEEQLQLLVEQMVDGSMRSITTKLYDGFQYLTNGIM.

Disordered regions lie at residues 1-30 (MGDTVVEPAPLKPTSEPTSGPPGNNGGSLL), 101-120 (EDEMGATVASGTAKGARRRR), and 248-318 (AHRK…SFSS). Glycine 2 is modified (N-acetylglycine). The interval 2–68 (GDTVVEPAPL…VKLLHGGMAV (67 aa)) is interaction with ACBD3. Residues 52 to 242 (CQDVLEKVKL…GTKLRKLILS (191 aa)) enclose the PIK helical domain. Phosphoserine is present on serine 258. Position 263 is a phosphothreonine (threonine 263). Phosphoserine is present on residues serine 266, serine 275, serine 277, serine 284, and serine 294. Polar residues-rich tracts occupy residues 278 to 297 (DATASISLSSNLKRTASNPK) and 306 to 318 (SSSTESIDNSFSS). Serine 428 is subject to Phosphoserine. Residue threonine 438 is modified to Phosphothreonine. Serine 511 is modified (phosphoserine). Residues threonine 517 and threonine 519 each carry the phosphothreonine modification. Residues 535–801 (EPWQEKVRRI…MVDGSMRSIT (267 aa)) form the PI3K/PI4K catalytic domain. Residues 541–547 (VRRIREG) form a G-loop region. The tract at residues 668 to 676 (QVKDRHNGN) is catalytic loop. An activation loop region spans residues 687-711 (HIDFGFILSSSPRNLGFETSAFKLT).

Belongs to the PI3/PI4-kinase family. Type III PI4K subfamily. In terms of assembly, interacts with ARF1 and ARF3 in the Golgi complex, but not with ARF4, ARF5 or ARF6. Interacts with NCS1/FREQ in a calcium-independent manner. Interacts with CALN1/CABP8 and CALN2/CABP7; in a calcium-dependent manner; this interaction competes with NCS1/FREQ binding. Interacts with ACBD3. Interacts with ARMH3, YWHAB, YWHAE, YWHAG, YWHAH, YWHAQ, YWHAZ and SFN. Interacts with GGA2 (via VHS domain); the interaction is important for PI4KB location at the Golgi apparatus membrane. Interacts with ATG9A. Requires Mg(2+) as cofactor. The cofactor is Mn(2+).

The protein resides in the endomembrane system. Its subcellular location is the mitochondrion outer membrane. The protein localises to the rough endoplasmic reticulum membrane. It localises to the golgi apparatus. It is found in the golgi apparatus membrane. It carries out the reaction a 1,2-diacyl-sn-glycero-3-phospho-(1D-myo-inositol) + ATP = a 1,2-diacyl-sn-glycero-3-phospho-(1D-myo-inositol 4-phosphate) + ADP + H(+). Its activity is regulated as follows. Inhibited by wortmannin. Increased kinase activity upon interaction with NCS1/FREQ. Functionally, phosphorylates phosphatidylinositol (PI) in the first committed step in the production of the second messenger inositol-1,4,5,-trisphosphate (PIP). May regulate Golgi disintegration/reorganization during mitosis, possibly via its phosphorylation. Involved in Golgi-to-plasma membrane trafficking. The polypeptide is Phosphatidylinositol 4-kinase beta (PI4KB) (Plecturocebus moloch (Dusky titi monkey)).